A 180-amino-acid chain; its full sequence is Large ribosomal subunit protein uL5 (180 aa).

The protein belongs to the universal ribosomal protein uL5 family. As to quaternary structure, part of the 50S ribosomal subunit; part of the 5S rRNA/L5/L18/L25 subcomplex. Contacts the 5S rRNA and the P site tRNA. Forms a bridge to the 30S subunit in the 70S ribosome.

Its function is as follows. This is one of the proteins that bind and probably mediate the attachment of the 5S RNA into the large ribosomal subunit, where it forms part of the central protuberance. In the 70S ribosome it contacts protein S13 of the 30S subunit (bridge B1b), connecting the 2 subunits; this bridge is implicated in subunit movement. Contacts the P site tRNA; the 5S rRNA and some of its associated proteins might help stabilize positioning of ribosome-bound tRNAs. In Cupriavidus metallidurans (strain ATCC 43123 / DSM 2839 / NBRC 102507 / CH34) (Ralstonia metallidurans), this protein is Large ribosomal subunit protein uL5.